Reading from the N-terminus, the 335-residue chain is DNA-directed RNA polymerase subunit alpha (335 aa).

The tract at residues 1–233 is alpha N-terminal domain (alpha-NTD); sequence MTRTANEFLT…QQIAIFVDLQ (233 aa). Positions 247-335 are alpha C-terminal domain (alpha-CTD); that stretch reads VDPILLRPVD…MDDRFAYRSR (89 aa).

This sequence belongs to the RNA polymerase alpha chain family. As to quaternary structure, homodimer. The RNAP catalytic core consists of 2 alpha, 1 beta, 1 beta' and 1 omega subunit. When a sigma factor is associated with the core the holoenzyme is formed, which can initiate transcription.

It carries out the reaction RNA(n) + a ribonucleoside 5'-triphosphate = RNA(n+1) + diphosphate. In terms of biological role, DNA-dependent RNA polymerase catalyzes the transcription of DNA into RNA using the four ribonucleoside triphosphates as substrates. The protein is DNA-directed RNA polymerase subunit alpha of Acinetobacter baumannii (strain AB307-0294).